The following is a 79-amino-acid chain: Acyl carrier protein (79 aa).

The Carrier domain maps to Ser-2–Ala-77. O-(pantetheine 4'-phosphoryl)serine is present on Ser-37.

Belongs to the acyl carrier protein (ACP) family. In terms of processing, 4'-phosphopantetheine is transferred from CoA to a specific serine of apo-ACP by AcpS. This modification is essential for activity because fatty acids are bound in thioester linkage to the sulfhydryl of the prosthetic group.

The protein resides in the cytoplasm. It participates in lipid metabolism; fatty acid biosynthesis. Its function is as follows. Carrier of the growing fatty acid chain in fatty acid biosynthesis. This Rhodopseudomonas palustris (strain HaA2) protein is Acyl carrier protein.